The chain runs to 362 residues: Prostaglandin E2 receptor EP2 subtype (362 aa).

Residues 1–24 (MDNFLNDSKLMEDCKSRQWLLSGE) are Extracellular-facing. A glycan (N-linked (GlcNAc...) asparagine) is linked at N6. A helical transmembrane segment spans residues 25–48 (SPAISSVMFSAGVLGNLIALALLA). The Cytoplasmic portion of the chain corresponds to 49 to 66 (RRWRGDTGCSAGSRTSIS). A helical transmembrane segment spans residues 67-92 (LFHVLVTELVLTDLLGTCLISPVVLA). Residues 93 to 112 (SYSRNQTLVALAPESHACTY) are Extracellular-facing. A disulfide bridge connects residues C110 and C188. The helical transmembrane segment at 113–133 (FAFTMTFFSLATMLMLFAMAL) threads the bilayer. The Cytoplasmic portion of the chain corresponds to 134 to 152 (ERYLSIGYPYFYRRHLSRR). Residues 153 to 177 (GGLAVLPVIYGASLLFCSLPLLNYG) form a helical membrane-spanning segment. At 178 to 199 (EYVQYCPGTWCFIRHGRTAYLQ) the chain is on the extracellular side. A helical transmembrane segment spans residues 200–224 (LYATMLLLLIVAVLACNISVILNLI). The Cytoplasmic portion of the chain corresponds to 225–262 (RMHRRSRRSRCGLSGSSLRGPGSRRRGERTSMAEETDH). The disordered stretch occupies residues 234 to 255 (RCGLSGSSLRGPGSRRRGERTS). The span at 235–245 (CGLSGSSLRGP) shows a compositional bias: low complexity. The helical transmembrane segment at 263–286 (LILLAIMTITFAICSLPFTIFAYM) threads the bilayer. Topologically, residues 287 to 299 (DETSSLKEKWDLR) are extracellular. The helical transmembrane segment at 300–323 (ALRFLSVNSIIDPWVFAILRPPVL) threads the bilayer. At 324 to 362 (RLMRSVLCCRTSLRTQEAQQTSCSTQSSASKQTDLCGQL) the chain is on the cytoplasmic side.

It belongs to the G-protein coupled receptor 1 family.

The protein localises to the cell membrane. Its function is as follows. Receptor for prostaglandin E2 (PGE2). The activity of this receptor is mediated by G(s) proteins that stimulate adenylate cyclase. The subsequent raise in intracellular cAMP is responsible for the relaxing effect of this receptor on smooth muscle. This is Prostaglandin E2 receptor EP2 subtype (Ptger2) from Mus musculus (Mouse).